We begin with the raw amino-acid sequence, 260 residues long: Thiazole synthase (260 aa).

The active-site Schiff-base intermediate with DXP is the lysine 100. 1-deoxy-D-xylulose 5-phosphate is bound by residues glycine 162, 188 to 189, and 210 to 211; these read AG and NT.

This sequence belongs to the ThiG family. In terms of assembly, homotetramer. Forms heterodimers with either ThiH or ThiS.

The protein localises to the cytoplasm. The catalysed reaction is [ThiS sulfur-carrier protein]-C-terminal-Gly-aminoethanethioate + 2-iminoacetate + 1-deoxy-D-xylulose 5-phosphate = [ThiS sulfur-carrier protein]-C-terminal Gly-Gly + 2-[(2R,5Z)-2-carboxy-4-methylthiazol-5(2H)-ylidene]ethyl phosphate + 2 H2O + H(+). It functions in the pathway cofactor biosynthesis; thiamine diphosphate biosynthesis. Functionally, catalyzes the rearrangement of 1-deoxy-D-xylulose 5-phosphate (DXP) to produce the thiazole phosphate moiety of thiamine. Sulfur is provided by the thiocarboxylate moiety of the carrier protein ThiS. In vitro, sulfur can be provided by H(2)S. This Wolinella succinogenes (strain ATCC 29543 / DSM 1740 / CCUG 13145 / JCM 31913 / LMG 7466 / NCTC 11488 / FDC 602W) (Vibrio succinogenes) protein is Thiazole synthase.